The following is a 649-amino-acid chain: MSEADASDAAPTGREIWIEKYRPATLENIYGQEDTVDRLQSYIDRDDLPHLLFAGPAGVGKCVTGSTPILTNKGIRQIGEIVGDVDGFAPAPQNLKVCSLTADGSFQYRHPSHVFGKRASGLQRIKTNDGATLTVTPEHKLLIRTGENTNPTWVPAADITAGMHVLRAKNLPIPAETTGSCAASKNASEVSHIGDEYRYHDSLMADVNTRIATLERLIEDYAESRSDGSLKFTLIGAHTPTVSTVSYLLATVGIASRHTSTLIDSEKRVHAIIIDASDTVRLEEMIETDWDTVMADQTTTVTSSSTASTTKTTQSYLSSGETQTCGWIPYADGGVTHPSTQHSPLHADVVTVSESLDAEKRVYDLTVPGVRNYVGGCIPTVMHNTTAATAIAHAVYGDDWQNNLLELNASDERGIDVVRDRIKNFARSSFGGYDHRIIFLDEADSLTDDAQSALRRTMEQFADNTRFILSCNYSSKIIDPIQSRCAVFRFSPLSETAIRGQTKDIAAAENIELTEDGLDALVYAAGGDMRRAINSLQAAATTGEVVDEETVYTITSTARPEDIETMVTAAIDGDFTTARSQLQTLLVDTGMAGGDIIDQLHRTAWNLDLDEETTVRLLERVGEADYRITVGANEQVQLEALLASLADTQ.

Position 55-385 (55-385 (GPAGVGKCVT…GCIPTVMHNT (331 aa))) interacts with ATP.

It belongs to the activator 1 small subunits family. RfcS subfamily. Heteromultimer composed of small subunits (RfcS) and large subunits (RfcL). This protein undergoes a protein self splicing that involves a post-translational excision of the intervening region (intein) followed by peptide ligation.

Part of the RFC clamp loader complex which loads the PCNA sliding clamp onto DNA. This chain is Replication factor C small subunit (rfcS), found in Haloquadratum walsbyi (strain DSM 16790 / HBSQ001).